The primary structure comprises 544 residues: Chaperonin GroEL (544 aa).

ATP is bound by residues 30-33 (TLGP), K51, 87-91 (DGTTT), G415, and D495.

This sequence belongs to the chaperonin (HSP60) family. In terms of assembly, forms a cylinder of 14 subunits composed of two heptameric rings stacked back-to-back. Interacts with the co-chaperonin GroES.

Its subcellular location is the cytoplasm. It carries out the reaction ATP + H2O + a folded polypeptide = ADP + phosphate + an unfolded polypeptide.. Together with its co-chaperonin GroES, plays an essential role in assisting protein folding. The GroEL-GroES system forms a nano-cage that allows encapsulation of the non-native substrate proteins and provides a physical environment optimized to promote and accelerate protein folding. The sequence is that of Chaperonin GroEL from Aeromonas salmonicida (strain A449).